The chain runs to 530 residues: Glucose-6-phosphate isomerase (530 aa).

Residue Glu356 is the Proton donor of the active site. Residues His387 and Lys502 contribute to the active site.

This sequence belongs to the GPI family.

Its subcellular location is the cytoplasm. The catalysed reaction is alpha-D-glucose 6-phosphate = beta-D-fructose 6-phosphate. It functions in the pathway carbohydrate biosynthesis; gluconeogenesis. It participates in carbohydrate degradation; glycolysis; D-glyceraldehyde 3-phosphate and glycerone phosphate from D-glucose: step 2/4. Its function is as follows. Catalyzes the reversible isomerization of glucose-6-phosphate to fructose-6-phosphate. The protein is Glucose-6-phosphate isomerase of Borreliella burgdorferi (strain ATCC 35210 / DSM 4680 / CIP 102532 / B31) (Borrelia burgdorferi).